Consider the following 380-residue polypeptide: NF-kappa-B inhibitor-like protein 1 (380 aa).

Residues 1–34 (MSNPSPQVPEEEASTSVCRPKSSMASTSRRQRRE) are disordered. ANK repeat units follow at residues 64 to 93 (GQPP…DPAH) and 97 to 133 (HGDT…IKNK). 2 disordered regions span residues 131 to 166 (KNKD…EWRQ) and 185 to 293 (GDAS…RGSL). Residue Ser150 is modified to Phosphoserine. Basic and acidic residues predominate over residues 237 to 286 (QQEEEQRLFRERARAKEEELRESRARRAQEALGDREPKPTRAGPREEHPR).

Interacts with CACTIN (via N-terminal domain); the interaction occurs in a pro-inflammatory-independent manner.

The protein localises to the nucleus. Functionally, involved in the regulation of innate immune response. Acts as negative regulator of Toll-like receptor and interferon-regulatory factor (IRF) signaling pathways. Contributes to the negative regulation of transcriptional activation of NF-kappa-B target genes in response to endogenous pro-inflammatory stimuli. The protein is NF-kappa-B inhibitor-like protein 1 (NFKBIL1) of Pan troglodytes (Chimpanzee).